The following is a 338-amino-acid chain: Ankyrin-repeat domain containing transcription coregulator asaA (338 aa).

Positions 1 to 10 (MGAPHEEIQA) are enriched in basic and acidic residues. 2 disordered regions span residues 1 to 70 (MGAP…LRST) and 112 to 137 (ASSV…PFID). A compositionally biased stretch (basic residues) spans 11–33 (LKRRREQNRLAQRRRRDNVRRRL). Residues 42-70 (SPASASQTSLCSSTDSRVTLNPHQSLRST) are compositionally biased toward polar residues. A compositionally biased stretch (low complexity) spans 112–130 (ASSVSPSSSAGPLSSSPSP). ANK repeat units follow at residues 235 to 264 (RWTT…DPNA), 268 to 297 (EGAT…DPTL), and 301 to 330 (AGWL…PVDY).

It functions in the pathway secondary metabolite biosynthesis. Functionally, transcription coregulator involved in regulation of gene cluster that mediates the biosynthesis of aspergillic acid, a hydroxamic acid-containing pyrazinone with aliphatic side chains that originates from leucine (Leu) and isoleucine (Ile). Aspergillic acid has antibiotic properties and was shown to be lethal to mice. This is Ankyrin-repeat domain containing transcription coregulator asaA from Aspergillus flavus (strain ATCC 200026 / FGSC A1120 / IAM 13836 / NRRL 3357 / JCM 12722 / SRRC 167).